A 78-amino-acid polypeptide reads, in one-letter code: Putative defensin-like protein 288 (78 aa).

The signal sequence occupies residues 1–21 (MSNLRLTIAVFLAALFQTLWW).

It belongs to the DEFL family.

The protein localises to the secreted. The polypeptide is Putative defensin-like protein 288 (Arabidopsis thaliana (Mouse-ear cress)).